Reading from the N-terminus, the 549-residue chain is Cytoplasmic trehalase (549 aa).

Substrate is bound by residues Arg-168, 175 to 176, Asn-212, 221 to 223, 292 to 294, and Gly-324; these read WD, RSQ, and RDE. Catalysis depends on proton donor/acceptor residues Asp-326 and Glu-509. Glu-525 serves as a coordination point for substrate.

It belongs to the glycosyl hydrolase 37 family. As to quaternary structure, monomer.

The protein localises to the cytoplasm. It carries out the reaction alpha,alpha-trehalose + H2O = alpha-D-glucose + beta-D-glucose. It participates in glycan degradation; trehalose degradation; D-glucose from alpha,alpha-trehalose: step 1/1. Its function is as follows. Hydrolyzes trehalose to glucose. Could be involved, in cells returning to low osmolarity conditions, in the utilization of the accumulated cytoplasmic trehalose, which was synthesized in response to high osmolarity. The sequence is that of Cytoplasmic trehalase from Escherichia coli O81 (strain ED1a).